A 613-amino-acid chain; its full sequence is Probable potassium transport system protein Kup (613 aa).

11 helical membrane-spanning segments follow: residues 38 to 58 (VLGVLSLLIWALLLIVTLKYL), 91 to 111 (WILVSLGLFGAALLYGDGMIT), 128 to 148 (PSFGPLVIPVTIAILAGLFLF), 159 to 179 (FFGPIILLWFTSIGLCGLVEI), 206 to 226 (FLVLGAVFLAVTGAEALYADM), 238 to 258 (WSLLVLPALLLNYFGQGAVLL), 270 to 290 (ALVPSWGIIPMVILATLATII), 328 to 348 (IYVPAANWALMFSTIALVAGF), 357 to 377 (AYGVAVTATMLISAVLFYYVA), 387 to 407 (GLNLLMGMFMLIDLSFFGASV), and 410 to 430 (LFHGAWFPLVIGFALFTLMLT).

This sequence belongs to the HAK/KUP transporter (TC 2.A.72) family.

Its subcellular location is the cell inner membrane. The enzyme catalyses K(+)(in) + H(+)(in) = K(+)(out) + H(+)(out). Its function is as follows. Transport of potassium into the cell. Likely operates as a K(+):H(+) symporter. This Chlorobaculum tepidum (strain ATCC 49652 / DSM 12025 / NBRC 103806 / TLS) (Chlorobium tepidum) protein is Probable potassium transport system protein Kup.